Consider the following 968-residue polypeptide: MPFTLGQRWISDTESELGLGTVVAVDARTVTLLFPSTGENRLYARSDSPVTRVMFNPGDTITSHDGWQMQVEEVKEENGLLTYIGTRLDTEESGVALREVFLDSKLVFSKPQDRLFAGQIDRMDRFALRYRARKYSSEQFRMPYSGLRGQRTSLIPHQLNIAHDVGRRHAPRVLLADEVGLGKTIEAGMILHQQLLSGAAERVLIIVPETLQHQWLVEMLRRFNLRFALFDDERYAEAQHDAYNPFDTEQLVICSLDFARRSKQRLEHLCEAEWDLLVVDEAHHLVWSEDAPSREYQAIEQLAEHVPGVLLLTATPEQLGMESHFARLRLLDPNRFHDFAQFVEEQKNYRPVADAVAMLLAGNKLSNDELNMLGEMIGEQDIEPLLQAANSDSEDAQSARQELVSMLMDRHGTSRVLFRNTRNGVKGFPKRELHTIKLPLPTQYQTAIKVSGIMGARKSAEDRARDMLYPERIYQEFEGDNATWWNFDPRVEWLMGYLTSHRSQKVLVICAKAATALQLEQVLREREGIRAAVFHEGMSIIERDRAAAWFAEEDTGAQVLLCSEIGSEGRNFQFASHMVMFDLPFNPDLLEQRIGRLDRIGQAHDIQIHVPYLEKTAQSVLVRWYHEGLDAFEHTCPTGRTIYDSVYNGLINYLASPDQTEGFDDLIKNCREQHEALKAQLEQGRDRLLEIHSNGGEKAQALAESIEEQDDDTNLIAFAMNLFDIIGINQDDRGDNMIVLTPSDHMLVPDFPGLSEDGITITFDREVALAREDAQFITWEHPLIRNGLDLILSGDTGSSTISLLKNKALPVGTLLVELIYVVEAQAPKQLQLNRFLPPTPVRMLLDKNGNNLAAQVEFETFNRQLNAVNRHTGSKLVNAVQQDVHAILQLGEAQIEKSARALIDAARNEADEKLSAELSRLEALRAVNPNIRDDELTAIESNRQQVMESLDQAGWRLDALRLIVVTHQ.

The Helicase ATP-binding domain maps to 164-334 (DVGRRHAPRV…FARLRLLDPN (171 aa)). ATP is bound at residue 177 to 184 (DEVGLGKT). The DEAH box motif lies at 280–283 (DEAH). Residues 490–662 (RVEWLMGYLT…YLASPDQTEG (173 aa)) form the Helicase C-terminal domain.

It belongs to the SNF2/RAD54 helicase family. RapA subfamily. In terms of assembly, interacts with the RNAP. Has a higher affinity for the core RNAP than for the holoenzyme. Its ATPase activity is stimulated by binding to RNAP.

Functionally, transcription regulator that activates transcription by stimulating RNA polymerase (RNAP) recycling in case of stress conditions such as supercoiled DNA or high salt concentrations. Probably acts by releasing the RNAP, when it is trapped or immobilized on tightly supercoiled DNA. Does not activate transcription on linear DNA. Probably not involved in DNA repair. This chain is RNA polymerase-associated protein RapA, found in Escherichia coli O9:H4 (strain HS).